The primary structure comprises 221 residues: Ribonuclease 3 (221 aa).

In terms of domain architecture, RNase III spans 4–121 (LEQLEKKLGY…LWAAVYIDSG (118 aa)). Residue Glu-40 participates in Mg(2+) binding. The active site involves Asp-44. Positions 107 and 110 each coordinate Mg(2+). Residue Glu-110 is part of the active site. Positions 151–219 (DYKTILQEIT…AEELIKLLEE (69 aa)) constitute a DRBM domain.

The protein belongs to the ribonuclease III family. As to quaternary structure, homodimer. The cofactor is Mg(2+).

The protein resides in the cytoplasm. It carries out the reaction Endonucleolytic cleavage to 5'-phosphomonoester.. In terms of biological role, digests double-stranded RNA. Involved in the processing of primary rRNA transcript to yield the immediate precursors to the large and small rRNAs (23S and 16S). Also processes some mRNAs, and tRNAs when they are encoded in the rRNA operon. Probably processes pre-crRNA and tracrRNA of type II CRISPR loci if present in the organism. This chain is Ribonuclease 3 (rnc), found in Aquifex aeolicus (strain VF5).